The primary structure comprises 360 residues: MLVWLAEHLVKYYSGFNVFSYLTFRAIVSLLTALFISLWMGPRMIARLQKLSFGQVVRNDGPESHFSKRGTPTMGGIMILTAIVVSVLLWAYPSNPYVWCVLVVLVGYGIIGFVDDYRKVVRKDTKGLIARWKYFWMSVIALGVAFALYLAGKDTPATELVVPFFKDVMPQLGLFYVLLAYFVIVGTGNAVNLTDGLDGLAIMPTVFVAAGFALVAWATGNMNFANYLHIPYLRHAGELVIVCTAIVGAGLGFLWFNTYPAQVFMGDVGSLALGGALGIIAVLLRQEFLLVIMGGVFVVETLSVILQVGSFKLRGQRIFRMAPIHHHYELKGWPEPRVIVRFWIISLMLVLIGLATLKVR.

10 helical membrane passes run 26–46, 72–92, 94–114, 132–152, 168–188, 199–219, 236–256, 263–283, 288–308, and 338–358; these read AIVS…RMIA, PTMG…LWAY, SNPY…IGFV, WKYF…YLAG, VMPQ…VGTG, GLAI…AWAT, AGEL…FLWF, VFMG…IAVL, FLLV…ILQV, and VIVR…ATLK.

Belongs to the glycosyltransferase 4 family. MraY subfamily. Mg(2+) is required as a cofactor.

Its subcellular location is the cell inner membrane. The enzyme catalyses UDP-N-acetyl-alpha-D-muramoyl-L-alanyl-gamma-D-glutamyl-meso-2,6-diaminopimeloyl-D-alanyl-D-alanine + di-trans,octa-cis-undecaprenyl phosphate = di-trans,octa-cis-undecaprenyl diphospho-N-acetyl-alpha-D-muramoyl-L-alanyl-D-glutamyl-meso-2,6-diaminopimeloyl-D-alanyl-D-alanine + UMP. The protein operates within cell wall biogenesis; peptidoglycan biosynthesis. Catalyzes the initial step of the lipid cycle reactions in the biosynthesis of the cell wall peptidoglycan: transfers peptidoglycan precursor phospho-MurNAc-pentapeptide from UDP-MurNAc-pentapeptide onto the lipid carrier undecaprenyl phosphate, yielding undecaprenyl-pyrophosphoryl-MurNAc-pentapeptide, known as lipid I. In Citrobacter koseri (strain ATCC BAA-895 / CDC 4225-83 / SGSC4696), this protein is Phospho-N-acetylmuramoyl-pentapeptide-transferase.